Consider the following 621-residue polypeptide: Chaperone protein HscA homolog (621 aa).

It belongs to the heat shock protein 70 family.

Functionally, chaperone involved in the maturation of iron-sulfur cluster-containing proteins. Has a low intrinsic ATPase activity which is markedly stimulated by HscB. The protein is Chaperone protein HscA homolog of Polynucleobacter asymbioticus (strain DSM 18221 / CIP 109841 / QLW-P1DMWA-1) (Polynucleobacter necessarius subsp. asymbioticus).